Here is a 445-residue protein sequence, read N- to C-terminus: C-terminal-binding protein 2 (445 aa).

Arg22 is modified (asymmetric dimethylarginine). Residues Ser106, 186–191, Asp210, 243–249, 270–272, and Asp296 contribute to the NAD(+) site; these read IGFGRT, CNLNEHN, and AAR. Arg272 is an active-site residue. Glu301 is a catalytic residue. His321 serves as the catalytic Proton donor. 321 to 324 contributes to the NAD(+) binding site; it reads HTAW. The segment at 414–445 is disordered; the sequence is THNLPTVAHPSQAPSPNQPTKHGDNREHPNEQ. At Ser428 the chain carries Phosphoserine; by HIPK2. Residues 434–445 show a composition bias toward basic and acidic residues; the sequence is KHGDNREHPNEQ.

The protein belongs to the D-isomer specific 2-hydroxyacid dehydrogenase family. As to quaternary structure, interacts with HIPK2, ZNF217 and PNN. Interacts with the transcription factors BKLF, delta EF1/AREB6/ZEB, EVI-1 and Friend of GATA (FOG) via the consensus motif P-X-[DNS]-L-[STVA]. Can form a complex with BKLF on a CACCC-box oligonucleotide. Can form homodimers or heterodimers of CTBP1 and CTBP2. Interacts with NRIP1 and WIZ. Interacts with PRDM16; represses white adipose tissue (WAT)-specific genes expression. Interacts with MCRIP1. Phosphorylation by HIPK2 on Ser-428 induces proteasomal degradation. Isoform 2 is specifically localized in synaptic ribbon (at protein level).

Its subcellular location is the nucleus. It is found in the synapse. Functionally, corepressor targeting diverse transcription regulators. Functions in brown adipose tissue (BAT) differentiation. Isoform 2 probably acts as a scaffold for specialized synapses. This chain is C-terminal-binding protein 2 (Ctbp2), found in Rattus norvegicus (Rat).